Here is a 241-residue protein sequence, read N- to C-terminus: Phosphoribosylaminoimidazole-succinocarboxamide synthase (241 aa).

This sequence belongs to the SAICAR synthetase family.

It carries out the reaction 5-amino-1-(5-phospho-D-ribosyl)imidazole-4-carboxylate + L-aspartate + ATP = (2S)-2-[5-amino-1-(5-phospho-beta-D-ribosyl)imidazole-4-carboxamido]succinate + ADP + phosphate + 2 H(+). The protein operates within purine metabolism; IMP biosynthesis via de novo pathway; 5-amino-1-(5-phospho-D-ribosyl)imidazole-4-carboxamide from 5-amino-1-(5-phospho-D-ribosyl)imidazole-4-carboxylate: step 1/2. In Lacticaseibacillus paracasei (strain ATCC 334 / BCRC 17002 / CCUG 31169 / CIP 107868 / KCTC 3260 / NRRL B-441) (Lactobacillus paracasei), this protein is Phosphoribosylaminoimidazole-succinocarboxamide synthase.